Reading from the N-terminus, the 1551-residue chain is Pentafunctional AROM polypeptide 1 (1551 aa).

Residues 1-379 (MSIEKVSILG…YESKAHQIFK (379 aa)) are 3-dehydroquinate synthase. NAD(+) is bound by residues 42–44 (DTN), 80–83 (ENHK), 111–113 (GGV), and Asp-116. A 7-phospho-2-dehydro-3-deoxy-D-arabino-heptonate-binding site is contributed by Arg-127. 136–137 (TT) provides a ligand contact to NAD(+). 7-phospho-2-dehydro-3-deoxy-D-arabino-heptonate contacts are provided by Asp-143 and Lys-149. NAD(+) is bound at residue Lys-158. Asn-159 provides a ligand contact to 7-phospho-2-dehydro-3-deoxy-D-arabino-heptonate. NAD(+) is bound by residues 176–179 (FLQT) and Asn-187. Residue Glu-191 coordinates Zn(2+). 7-phospho-2-dehydro-3-deoxy-D-arabino-heptonate-binding positions include 191–194 (EVVK) and Lys-243. The active-site Proton acceptor; for 3-dehydroquinate synthase activity is Glu-253. 7-phospho-2-dehydro-3-deoxy-D-arabino-heptonate is bound by residues 257 to 261 (RNLLN) and His-264. His-264 serves as a coordination point for Zn(2+). His-268 acts as the Proton acceptor; for 3-dehydroquinate synthase activity in catalysis. 7-phospho-2-dehydro-3-deoxy-D-arabino-heptonate contacts are provided by His-280 and Lys-351. Residue His-280 coordinates Zn(2+). The EPSP synthase stretch occupies residues 392–835 (VHPFANRHPE…WDVLHSKFNA (444 aa)). The interval 854 to 1044 (DRSIVIIGMR…LPATRSTFVT (191 aa)) is shikimate kinase. Residue 861–868 (GMRAAGKT) coordinates ATP. Residues 1045–1258 (LTYPDLRKVP…IGVGQLSLKE (214 aa)) are 3-dehydroquinase. His-1162 (proton acceptor; for 3-dehydroquinate dehydratase activity) is an active-site residue. Lys-1191 acts as the Schiff-base intermediate with substrate; for 3-dehydroquinate dehydratase activity in catalysis. Residues 1271–1551 (EKEFWVVGSP…KVIHSAVLNE (281 aa)) are shikimate dehydrogenase.

It in the N-terminal section; belongs to the sugar phosphate cyclases superfamily. Dehydroquinate synthase family. In the 2nd section; belongs to the EPSP synthase family. The protein in the 3rd section; belongs to the shikimate kinase family. This sequence in the 4th section; belongs to the type-I 3-dehydroquinase family. It in the C-terminal section; belongs to the shikimate dehydrogenase family. Homodimer. It depends on Zn(2+) as a cofactor.

Its subcellular location is the cytoplasm. It catalyses the reaction 7-phospho-2-dehydro-3-deoxy-D-arabino-heptonate = 3-dehydroquinate + phosphate. The catalysed reaction is 3-dehydroquinate = 3-dehydroshikimate + H2O. The enzyme catalyses shikimate + NADP(+) = 3-dehydroshikimate + NADPH + H(+). It carries out the reaction shikimate + ATP = 3-phosphoshikimate + ADP + H(+). It catalyses the reaction 3-phosphoshikimate + phosphoenolpyruvate = 5-O-(1-carboxyvinyl)-3-phosphoshikimate + phosphate. It functions in the pathway metabolic intermediate biosynthesis; chorismate biosynthesis; chorismate from D-erythrose 4-phosphate and phosphoenolpyruvate: step 2/7. The protein operates within metabolic intermediate biosynthesis; chorismate biosynthesis; chorismate from D-erythrose 4-phosphate and phosphoenolpyruvate: step 3/7. Its pathway is metabolic intermediate biosynthesis; chorismate biosynthesis; chorismate from D-erythrose 4-phosphate and phosphoenolpyruvate: step 4/7. It participates in metabolic intermediate biosynthesis; chorismate biosynthesis; chorismate from D-erythrose 4-phosphate and phosphoenolpyruvate: step 5/7. It functions in the pathway metabolic intermediate biosynthesis; chorismate biosynthesis; chorismate from D-erythrose 4-phosphate and phosphoenolpyruvate: step 6/7. The AROM polypeptide catalyzes 5 consecutive enzymatic reactions in prechorismate polyaromatic amino acid biosynthesis. This Lodderomyces elongisporus (strain ATCC 11503 / CBS 2605 / JCM 1781 / NBRC 1676 / NRRL YB-4239) (Yeast) protein is Pentafunctional AROM polypeptide 1.